A 446-amino-acid chain; its full sequence is Oxysterols receptor LXR-beta (446 aa).

Residues 1–28 (MSSPTSSLDTPLPGNGSPQPSTSSTSPT) are compositionally biased toward low complexity. Residues 1–69 (MSSPTSSLDT…PERKRKKGPA (69 aa)) are disordered. Residues 1 to 76 (MSSPTSSLDT…GPAPKMLGHE (76 aa)) are transactivation AF-1; required for ligand-independent transactivation function. The segment at residues 75–152 (HELCRVCGDK…AGMREQCVLS (78 aa)) is a DNA-binding region (nuclear receptor). 2 NR C4-type zinc fingers span residues 78–98 (CRVC…CEGC) and 116–140 (CRGS…LRKC). The segment at 160–201 (KIQKQQQQQPPPPTEPASGSSARPAASPGTSEASSQGSGEGE) is disordered. A compositionally biased stretch (low complexity) spans 175-196 (PASGSSARPAASPGTSEASSQG). The segment at 205 to 446 (LTAAQELMIQ…LLSEIWDVHE (242 aa)) is transactivation AF-2; required for ligand-dependent transactivation function; mediates interaction with CCAR2. Residues 208–446 (AQELMIQQLV…LLSEIWDVHE (239 aa)) enclose the NR LBD domain. Glycyl lysine isopeptide (Lys-Gly) (interchain with G-Cter in SUMO2) cross-links involve residues lysine 395 and lysine 433.

The protein belongs to the nuclear hormone receptor family. NR1 subfamily. As to quaternary structure, forms a heterodimer with RXR. Interacts with CCAR2 (via N-terminus) in a ligand-independent manner. Interacts (when sumoylated) with GPS2; interaction with GPS2 onto hepatic acute phase protein promoters prevents N-Cor corepressor complex dissociation. Interacts with ABCA12 and ABCA1; this interaction is required for ABCA1 localization to the cell surface and is necessary for its normal activity and stability. Sumoylated by SUMO2 at Lys-395 and Lys-433 during the hepatic acute phase response, leading to promote interaction with GPS2 and prevent N-Cor corepressor complex dissociation.

It localises to the nucleus. Its function is as follows. Nuclear receptor that exhibits a ligand-dependent transcriptional activation activity. Binds preferentially to double-stranded oligonucleotide direct repeats having the consensus half-site sequence 5'-AGGTCA-3' and 4-nt spacing (DR-4). Regulates cholesterol uptake through MYLIP-dependent ubiquitination of LDLR, VLDLR and LRP8; DLDLR and LRP8. Interplays functionally with RORA for the regulation of genes involved in liver metabolism. Induces LPCAT3-dependent phospholipid remodeling in endoplasmic reticulum (ER) membranes of hepatocytes, driving SREBF1 processing and lipogenesis. Via LPCAT3, triggers the incorporation of arachidonate into phosphatidylcholines of ER membranes, increasing membrane dynamics and enabling triacylglycerols transfer to nascent very low-density lipoprotein (VLDL) particles. Via LPCAT3 also counteracts lipid-induced ER stress response and inflammation, likely by modulating SRC kinase membrane compartmentalization and limiting the synthesis of lipid inflammatory mediators. Plays an anti-inflammatory role during the hepatic acute phase response by acting as a corepressor: inhibits the hepatic acute phase response by preventing dissociation of the N-Cor corepressor complex. This Rattus norvegicus (Rat) protein is Oxysterols receptor LXR-beta (Nr1h2).